The sequence spans 254 residues: MKKLVKVRGITLGEGRPKICVPLVGKNLAQLKEEAAYFQTLDADIAEWRADFYEDVDDVDQVCAALAEIRGLLKDTPLIFTFRSAAEGGEKEISTARYFSLNEAVVKTGLADVIDIELFNDEEQVKALVETAHGHEVSVIISNHDFEKTPAAEEIVSRLRKAQELGADLPKIAVMPETTADVLRLLEATCTMNEKYADRPIITMSMAGKGIISRLAGEVFGSAMTFGAAKKASAPGQIAAGELKEILHILHRNL.

Residues Glu47–Arg49 and Arg83 each bind 3-dehydroquinate. His144 (proton donor/acceptor) is an active-site residue. Lys171 acts as the Schiff-base intermediate with substrate in catalysis. 3-dehydroquinate-binding residues include Arg214, Ser233, and Gln237.

Belongs to the type-I 3-dehydroquinase family. In terms of assembly, homodimer.

It carries out the reaction 3-dehydroquinate = 3-dehydroshikimate + H2O. The protein operates within metabolic intermediate biosynthesis; chorismate biosynthesis; chorismate from D-erythrose 4-phosphate and phosphoenolpyruvate: step 3/7. Involved in the third step of the chorismate pathway, which leads to the biosynthesis of aromatic amino acids. Catalyzes the cis-dehydration of 3-dehydroquinate (DHQ) and introduces the first double bond of the aromatic ring to yield 3-dehydroshikimate. The chain is 3-dehydroquinate dehydratase from Bacillus licheniformis (strain ATCC 14580 / DSM 13 / JCM 2505 / CCUG 7422 / NBRC 12200 / NCIMB 9375 / NCTC 10341 / NRRL NRS-1264 / Gibson 46).